The primary structure comprises 308 residues: Protoheme IX farnesyltransferase 2 (308 aa).

The next 9 helical transmembrane spans lie at 20 to 40, 47 to 67, 92 to 114, 118 to 137, 144 to 164, 174 to 194, 218 to 238, 240 to 260, and 275 to 295; these read VTKP…FLLA, AVLM…GCAI, IPLK…LLAW, LAAL…LYSL, VYGT…GYCA, LILL…IAIF, LHIV…PLAG, TGVG…LMAL, and QVFG…ALDF.

It belongs to the UbiA prenyltransferase family. Protoheme IX farnesyltransferase subfamily.

It is found in the cell inner membrane. It carries out the reaction heme b + (2E,6E)-farnesyl diphosphate + H2O = Fe(II)-heme o + diphosphate. It functions in the pathway porphyrin-containing compound metabolism; heme O biosynthesis; heme O from protoheme: step 1/1. In terms of biological role, converts heme B (protoheme IX) to heme O by substitution of the vinyl group on carbon 2 of heme B porphyrin ring with a hydroxyethyl farnesyl side group. The sequence is that of Protoheme IX farnesyltransferase 2 from Shewanella loihica (strain ATCC BAA-1088 / PV-4).